We begin with the raw amino-acid sequence, 392 residues long: Formate-dependent phosphoribosylglycinamide formyltransferase (392 aa).

Residues 22–23 (EL) and E82 each bind N(1)-(5-phospho-beta-D-ribosyl)glycinamide. Residues R114, K155, 160–165 (SSGKGQ), 195–198 (EGVV), and E203 each bind ATP. The 190-residue stretch at 119–308 (RLAAEELQLP…EFALHVRAFL (190 aa)) folds into the ATP-grasp domain. The Mg(2+) site is built by E267 and E279. Residues D286, K355, and 362-363 (RR) contribute to the N(1)-(5-phospho-beta-D-ribosyl)glycinamide site.

It belongs to the PurK/PurT family. In terms of assembly, homodimer.

It catalyses the reaction N(1)-(5-phospho-beta-D-ribosyl)glycinamide + formate + ATP = N(2)-formyl-N(1)-(5-phospho-beta-D-ribosyl)glycinamide + ADP + phosphate + H(+). It participates in purine metabolism; IMP biosynthesis via de novo pathway; N(2)-formyl-N(1)-(5-phospho-D-ribosyl)glycinamide from N(1)-(5-phospho-D-ribosyl)glycinamide (formate route): step 1/1. Functionally, involved in the de novo purine biosynthesis. Catalyzes the transfer of formate to 5-phospho-ribosyl-glycinamide (GAR), producing 5-phospho-ribosyl-N-formylglycinamide (FGAR). Formate is provided by PurU via hydrolysis of 10-formyl-tetrahydrofolate. The protein is Formate-dependent phosphoribosylglycinamide formyltransferase of Escherichia coli O157:H7.